The primary structure comprises 474 residues: MGASMEKQTVVTRFAPSPTGFLHIGGARTALFNWLFARHHGGKFLLRIEDTDRARSTQEAIDAILDGMRWLDLGWDGEVVYQFARAERHAEVARELLANGHAYRCYATPEELAELREQQRAAKQPLRYDGRWRDRDPSEAPAGAPFVIRLKAPRTGEVTIDDQVQGPVTVQNAELDDMILLRSDGTPTYMLAVVVDDHDMGVTHVIRGDDHLNNAFRQLALIRAMGWEEPVYAHIPLIHGADGAKLSKRHGALGVDAYRDELGLLSEAVNNYLLRLGWGHGDDEIISREQAVEWFDLAGVGRSPSRFDFKKLENLNGHYMREADDARLADLIAPGVAARAGREFDSADHDLLLRSIPFLKVRAKDINELAEGASFLFRTRPLDMDEKAASLLDDPGKALLAQAREALAATDDWSALALEAGVRSVAERGGIGLGKVAQPLRAALTGRTTSPGIFDVLALLGREESLGRLDDQLG.

The 'HIGH' region signature appears at 16–26 (PSPTGFLHIGG). A 'KMSKS' region motif is present at residues 245–249 (KLSKR). An ATP-binding site is contributed by Lys-248.

It belongs to the class-I aminoacyl-tRNA synthetase family. Glutamate--tRNA ligase type 1 subfamily. In terms of assembly, monomer.

The protein resides in the cytoplasm. It catalyses the reaction tRNA(Glu) + L-glutamate + ATP = L-glutamyl-tRNA(Glu) + AMP + diphosphate. Its function is as follows. Catalyzes the attachment of glutamate to tRNA(Glu) in a two-step reaction: glutamate is first activated by ATP to form Glu-AMP and then transferred to the acceptor end of tRNA(Glu). This is Glutamate--tRNA ligase 2 from Rhizorhabdus wittichii (strain DSM 6014 / CCUG 31198 / JCM 15750 / NBRC 105917 / EY 4224 / RW1) (Sphingomonas wittichii).